We begin with the raw amino-acid sequence, 277 residues long: 3-methyl-2-oxobutanoate hydroxymethyltransferase (277 aa).

Mg(2+)-binding residues include Asp-43 and Asp-82. Residues 43 to 44, Asp-82, and Lys-112 contribute to the 3-methyl-2-oxobutanoate site; that span reads DS. Glu-114 serves as a coordination point for Mg(2+). The active-site Proton acceptor is Glu-181.

Belongs to the PanB family. Homodecamer; pentamer of dimers. Requires Mg(2+) as cofactor.

Its subcellular location is the cytoplasm. It catalyses the reaction 3-methyl-2-oxobutanoate + (6R)-5,10-methylene-5,6,7,8-tetrahydrofolate + H2O = 2-dehydropantoate + (6S)-5,6,7,8-tetrahydrofolate. The protein operates within cofactor biosynthesis; (R)-pantothenate biosynthesis; (R)-pantoate from 3-methyl-2-oxobutanoate: step 1/2. Its function is as follows. Catalyzes the reversible reaction in which hydroxymethyl group from 5,10-methylenetetrahydrofolate is transferred onto alpha-ketoisovalerate to form ketopantoate. This chain is 3-methyl-2-oxobutanoate hydroxymethyltransferase, found in Listeria monocytogenes serotype 4a (strain HCC23).